The sequence spans 170 residues: MATQDSQGIKLFGKTIAFNTRTIKNEEETHPPEQEATIAVRSSSSSDLTAEKRPDKIIACPRCKSMETKFCYFNNYNVNQPRHFCKGCHRYWTAGGALRNVPVGAGRRKSKPPGRVVVGMLGDGNGVRQVELINGLLVEEWQHAAAAAHGSFRHDFPMKRLRCYSDGQSC.

The interval 25–51 (NEEETHPPEQEATIAVRSSSSSDLTAE) is disordered. The segment at 58-112 (IACPRCKSMETKFCYFNNYNVNQPRHFCKGCHRYWTAGGALRNVPVGAGRRKSKP) adopts a Dof-type zinc-finger fold. Residues C60, C63, C85, and C88 each coordinate Zn(2+).

As to expression, expressed in the vasculature of cotyledons and hypocotyls, leaves and roots.

It is found in the nucleus. Functionally, transcription factor that binds specifically to a 5'-AA[AG]G-3' consensus core sequence. Transcriptional repressor of 'CONSTANS' expression. Regulates a photoperiodic flowering response. This is Cyclic dof factor 4 (CDF4) from Arabidopsis thaliana (Mouse-ear cress).